An 814-amino-acid chain; its full sequence is Coiled-coil and C2 domain-containing protein 1-like (814 aa).

The segment covering 1–11 has biased composition (basic and acidic residues); it reads MFAKRKPEPAK. Disordered stretches follow at residues 1–136 and 157–263; these read MFAK…TFLP and EANA…RSRQ. Over residues 25 to 47 the composition is skewed to acidic residues; the sequence is IPDDFDPTSGYGDDDGGDSDLEA. A compositionally biased stretch (basic and acidic residues) spans 73-85; sequence DLDKMIADSLRDV. Acidic residues-rich tracts occupy residues 86 to 100 and 110 to 130; these read SDDD…DSDL and LEEE…EEEP. Residues 143-201 are DM14 1; that stretch reads LGIIKQRLEIYKQAEANAKASGDSGKARRFGRGLKTLQDLHKQAAAGKTINVDDIPPEV. Low complexity predominate over residues 205–230; it reads PAGDPSPAADESPAPSTPVSQPTRVA. Pro residues predominate over residues 231-254; that stretch reads PAPPTPTSPPAATPPPAPATPPNP. DM14 stretches follow at residues 256-314 and 358-416; these read VAQM…PPPP and LEAL…PVPP. A coiled-coil region spans residues 351–378; the sequence is AAAAESMLEALQRRLEKYKSVEAAAKAE. Positions 414–425 are enriched in pro residues; the sequence is VPPGFGPLPSTE. The tract at residues 414–486 is disordered; that stretch reads VPPGFGPLPS…LTTRVTGNHQ (73 aa). Over residues 426–462 the composition is skewed to low complexity; it reads PAPAATPSLPTSPTSPPATASTSAGGTPSGSSATTPT. Residues 475–486 show a composition bias toward polar residues; that stretch reads TELTTRVTGNHQ. The DM14 4 stretch occupies residues 495-553; it reads MKLLLERQKEFKVAAIEAKKAGEIDQAKEYLKIYKGFDSLLNAASSGLPVDLSTLPVPP. A C2 domain is found at 633-772; sequence RKGQPLPKFH…ETKCDIHDTY (140 aa).

It belongs to the CC2D1 family. Interacts (via DM14 domains 1 and 3) with shrb; the interaction is direct and blocks access to the surface involved in shrb polymerization. This interaction may be required for the ESCRT-III complex role in multivesicular body formation.

The protein resides in the cytoplasm. The protein localises to the cytosol. It localises to the apicolateral cell membrane. It is found in the cell cortex. Its subcellular location is the endosome. Functionally, phosphatidyl inositol monophosphate binding protein involved in endosomal protein sorting through regulation of the endosomal sorting required for transport (ESCRT) pathway. Required for full activity of the ESCRT-III complex core component shrb/shrub, probably by preventing its inappropriate polymerisation. Required, but not essential, for the efficient generation of intraluminal vesicles (ILVs) in multivesicular bodies (MVBs). Involved in a late stage of the endosomal pathway targeting transmembrane proteins of the plasma membrane for lysosomal degradation. Plays a critical role in regulation of multiple signal transduction pathways, including the Notch and BMP/decapentaplegic (dpp) signaling pathways, through targeting of membrane bound receptors to multivesicular bodies, isolating them from the cytoplasm and targeting them for lysosomal degradation. Involved in targeting N/Notch for endosomal degradation, negatively regulating the Notch signaling pathway. Regulates Notch signaling in imaginal disk cells and follicle cells during oogenesis and multiple developmental processes, including development of wings, veins, legs, eyes and bristles. Restricts the activity of Notch to the dorsoventral (D/V) boundary of the wing imaginal disk. In external sensory organ development regulates Notch signaling during asymmetric cell division and differentiation of sensory organ precursor cells. May be involved in regulation of apoptosis and cell growth independent of Notch signaling. Involved in targeting tkv for endosomal degradation, negatively regulating the BMP/decapentaplegic (dpp) signaling pathway. Regulates the BMP/dpp signaling pathway in follicle cells during oogenesis, but not in imaginal disk cells during wing development. May be involved in differentiation or morphogenesis of peripodial epithelial cells in the developing imaginal disk. Involved in abscission of germline cells during oogenesis. The sequence is that of Coiled-coil and C2 domain-containing protein 1-like from Drosophila pseudoobscura pseudoobscura (Fruit fly).